Consider the following 394-residue polypeptide: Dual-specificity RNA methyltransferase RlmN (394 aa).

Residue Glu-92 is the Proton acceptor of the active site. The Radical SAM core domain occupies 98 to 341 (ENDRGTLCIS…TTVRRTRGDD (244 aa)). Residues Cys-105 and Cys-346 are joined by a disulfide bond. [4Fe-4S] cluster contacts are provided by Cys-112, Cys-116, and Cys-119. S-adenosyl-L-methionine-binding positions include 166-167 (GE), Ser-198, 220-222 (SLH), and Asn-303. The S-methylcysteine intermediate role is filled by Cys-346. Residues 374 to 394 (DSAVQRRADAAPSGSATETTR) are disordered.

It belongs to the radical SAM superfamily. RlmN family. Requires [4Fe-4S] cluster as cofactor.

The protein resides in the cytoplasm. It carries out the reaction adenosine(2503) in 23S rRNA + 2 reduced [2Fe-2S]-[ferredoxin] + 2 S-adenosyl-L-methionine = 2-methyladenosine(2503) in 23S rRNA + 5'-deoxyadenosine + L-methionine + 2 oxidized [2Fe-2S]-[ferredoxin] + S-adenosyl-L-homocysteine. It catalyses the reaction adenosine(37) in tRNA + 2 reduced [2Fe-2S]-[ferredoxin] + 2 S-adenosyl-L-methionine = 2-methyladenosine(37) in tRNA + 5'-deoxyadenosine + L-methionine + 2 oxidized [2Fe-2S]-[ferredoxin] + S-adenosyl-L-homocysteine. Specifically methylates position 2 of adenine 2503 in 23S rRNA and position 2 of adenine 37 in tRNAs. m2A2503 modification seems to play a crucial role in the proofreading step occurring at the peptidyl transferase center and thus would serve to optimize ribosomal fidelity. The sequence is that of Dual-specificity RNA methyltransferase RlmN from Methylibium petroleiphilum (strain ATCC BAA-1232 / LMG 22953 / PM1).